A 212-amino-acid polypeptide reads, in one-letter code: Glutathione S-transferase hmp2 (212 aa).

One can recognise a GST N-terminal domain in the interval Met1 to Thr80. Residues Lys51–Val52 and Glu64–Ser65 each bind glutathione. The GST C-terminal domain maps to Asp88 to Arg212.

This sequence belongs to the GST superfamily.

The catalysed reaction is RX + glutathione = an S-substituted glutathione + a halide anion + H(+). The protein operates within secondary metabolite biosynthesis. Its function is as follows. Glutathione S-transferase; part of the gene cluster that mediates the biosynthesis of hypothemycin, a resorcylic acid lactone (RAL) that irreversibly inhibits a subset of protein kinases with a conserved cysteine in the ATP binding site such as human ERK2. The first step is performed by both PKSs hmp3 and hmp8 and leads to the production of 7',8'-dehydrozearalenol (DHZ). The highly reducing PKS hpm8 synthesizes the reduced hexaketide (7S,11S,2E,8E)-7,11-dihydroxy-dodeca-2,8-dienoate, which is transferred downstream to the non-reducing PKS hpm3. Hpm3 then extends the reduced hexaketide to a nonaketide, after which regioselective cyclization and macrolactonization affords DHZ. The next step is the conversion of DHZ into aigialomycin C and is performed by the O-methyltransferase hmp5, the FAD-binding monooxygenase hmp7, and the cytochrome P450 monooxygenase hmp1. The wide substrate tolerance of the hmp5 and hmp7 implies that the reactions from DHZ to aigialomycin C can occur in any order. The steps from aigialomycin C to hypothemycin are less well established. The FAD-linked oxidoreductase hmp9 presumably catalyzes oxidation of the C-6' hydroxyl to a ketone. The timing of this oxidation is important, since the resulting enone functional group is a Michael acceptor that can react spontaneously with glutathione, an abundant metabolite in fungal cells. The glutathione S-transferase hmp2 catalyzes cis-trans isomerization of the 7',8' double bond with equilibrium favoring the trans isomer. The hpm6-encoded transporter might preferentially pump hypothemycin out of the cell relative to the trans isomer aigialomycin A. The cis-to-trans isomerization may be coupled with C-4' hydroxylation, since all known hypothemycin analogs containing the enone functional group also have hydroxyl groups at both C-4' and C-5'. The protein is Glutathione S-transferase hmp2 of Hypomyces subiculosus (Nectria subiculosa).